Consider the following 148-residue polypeptide: Large ribosomal subunit protein bL9 (148 aa).

The protein belongs to the bacterial ribosomal protein bL9 family.

In terms of biological role, binds to the 23S rRNA. In Pseudomonas putida (strain ATCC 700007 / DSM 6899 / JCM 31910 / BCRC 17059 / LMG 24140 / F1), this protein is Large ribosomal subunit protein bL9.